We begin with the raw amino-acid sequence, 114 residues long: Nuclear transition protein 2 (114 aa).

Positions 1 to 114 (MDTKMQSLPT…KRRSSGRRYK (114 aa)) are disordered. Zn(2+) contacts are provided by H12, H14, H16, H24, C29, C31, C35, and C38. Positions 16–25 (HSSSRPQSHT) are enriched in low complexity. A Nuclear localization signal motif is present at residues 87–95 (GKVSKRKAV). Over residues 90 to 114 (SKRKAVRRRKRTHRAKRRSSGRRYK) the composition is skewed to basic residues. T101 carries the phosphothreonine; by PKA modification. A Phosphoserine; by PKA modification is found at S109.

This sequence belongs to the nuclear transition protein 2 family. As to expression, testis.

It is found in the nucleus. Its subcellular location is the nucleolus. The protein resides in the chromosome. Its function is as follows. Plays a key role in the replacement of histones to protamine in the elongating spermatids of mammals. In condensing spermatids, loaded onto the nucleosomes, where it promotes the recruitment and processing of protamines, which are responsible for histone eviction. The protein is Nuclear transition protein 2 (Tnp2) of Rattus norvegicus (Rat).